We begin with the raw amino-acid sequence, 338 residues long: uncharacterized protein (338 aa).

A signal peptide spans 1–29 (MIKQLCKNITICTLALSTTFTVLPATSFA).

It belongs to the aerolysin family.

This is an uncharacterized protein from Staphylococcus aureus (strain USA300).